The chain runs to 320 residues: Aspartate carbamoyltransferase catalytic subunit (320 aa).

The carbamoyl phosphate site is built by R53 and T54. K82 is an L-aspartate binding site. Residues R103, H131, and Q134 each coordinate carbamoyl phosphate. Residues R164 and R227 each contribute to the L-aspartate site. Residues L266 and P267 each coordinate carbamoyl phosphate.

Belongs to the aspartate/ornithine carbamoyltransferase superfamily. ATCase family. As to quaternary structure, heterododecamer (2C3:3R2) of six catalytic PyrB chains organized as two trimers (C3), and six regulatory PyrI chains organized as three dimers (R2).

It carries out the reaction carbamoyl phosphate + L-aspartate = N-carbamoyl-L-aspartate + phosphate + H(+). It participates in pyrimidine metabolism; UMP biosynthesis via de novo pathway; (S)-dihydroorotate from bicarbonate: step 2/3. Functionally, catalyzes the condensation of carbamoyl phosphate and aspartate to form carbamoyl aspartate and inorganic phosphate, the committed step in the de novo pyrimidine nucleotide biosynthesis pathway. The chain is Aspartate carbamoyltransferase catalytic subunit from Bifidobacterium adolescentis (strain ATCC 15703 / DSM 20083 / NCTC 11814 / E194a).